The primary structure comprises 460 residues: CCA-adding enzyme (460 aa).

ATP-binding residues include S50 and R53. CTP contacts are provided by S50 and R53. The Mg(2+) site is built by D62, D64, and D117. The ATP site is built by H140, K159, and Y168. 3 residues coordinate CTP: H140, K159, and Y168.

The protein belongs to the tRNA nucleotidyltransferase/poly(A) polymerase family. Archaeal CCA-adding enzyme subfamily. Homodimer. Mg(2+) serves as cofactor.

The catalysed reaction is a tRNA precursor + 2 CTP + ATP = a tRNA with a 3' CCA end + 3 diphosphate. It catalyses the reaction a tRNA with a 3' CCA end + 2 CTP + ATP = a tRNA with a 3' CCACCA end + 3 diphosphate. Functionally, catalyzes the addition and repair of the essential 3'-terminal CCA sequence in tRNAs without using a nucleic acid template. Adds these three nucleotides in the order of C, C, and A to the tRNA nucleotide-73, using CTP and ATP as substrates and producing inorganic pyrophosphate. tRNA 3'-terminal CCA addition is required both for tRNA processing and repair. Also involved in tRNA surveillance by mediating tandem CCA addition to generate a CCACCA at the 3' terminus of unstable tRNAs. While stable tRNAs receive only 3'-terminal CCA, unstable tRNAs are marked with CCACCA and rapidly degraded. This Methanoregula boonei (strain DSM 21154 / JCM 14090 / 6A8) protein is CCA-adding enzyme.